Here is a 215-residue protein sequence, read N- to C-terminus: Orotidine 5'-phosphate decarboxylase (215 aa).

Residues Asp12, Lys34, Asp60–Thr69, Ser117, Pro170–Ala180, Gly193, and Arg194 each bind substrate. Lys62 functions as the Proton donor in the catalytic mechanism.

It belongs to the OMP decarboxylase family. Type 1 subfamily. In terms of assembly, homodimer.

The enzyme catalyses orotidine 5'-phosphate + H(+) = UMP + CO2. It participates in pyrimidine metabolism; UMP biosynthesis via de novo pathway; UMP from orotate: step 2/2. In terms of biological role, catalyzes the decarboxylation of orotidine 5'-monophosphate (OMP) to uridine 5'-monophosphate (UMP). In Methanococcoides burtonii (strain DSM 6242 / NBRC 107633 / OCM 468 / ACE-M), this protein is Orotidine 5'-phosphate decarboxylase.